We begin with the raw amino-acid sequence, 283 residues long: DegV domain-containing protein lmo2514 (283 aa).

The DegV domain occupies 5 to 282 (IAVVTDSTTY…EGALGLTWSI (278 aa)). S63 and S96 together coordinate hexadecanoate.

May bind long-chain fatty acids, such as palmitate, and may play a role in lipid transport or fatty acid metabolism. This chain is DegV domain-containing protein lmo2514, found in Listeria monocytogenes serovar 1/2a (strain ATCC BAA-679 / EGD-e).